We begin with the raw amino-acid sequence, 318 residues long: Ferredoxin--NADP reductase (318 aa).

FAD contacts are provided by Asp33, Gln41, Tyr46, Val84, Phe115, Asp276, and Thr316.

This sequence belongs to the ferredoxin--NADP reductase type 2 family. Homodimer. FAD serves as cofactor.

It catalyses the reaction 2 reduced [2Fe-2S]-[ferredoxin] + NADP(+) + H(+) = 2 oxidized [2Fe-2S]-[ferredoxin] + NADPH. This Lactobacillus johnsonii (strain CNCM I-12250 / La1 / NCC 533) protein is Ferredoxin--NADP reductase.